We begin with the raw amino-acid sequence, 188 residues long: Pyridoxal 5'-phosphate synthase subunit PdxT (188 aa).

Residue 46 to 48 (GES) participates in L-glutamine binding. C78 serves as the catalytic Nucleophile. Residues R105 and 133–134 (IR) contribute to the L-glutamine site. Active-site charge relay system residues include H169 and E171.

Belongs to the glutaminase PdxT/SNO family. In the presence of PdxS, forms a dodecamer of heterodimers. Only shows activity in the heterodimer.

The enzyme catalyses aldehydo-D-ribose 5-phosphate + D-glyceraldehyde 3-phosphate + L-glutamine = pyridoxal 5'-phosphate + L-glutamate + phosphate + 3 H2O + H(+). It catalyses the reaction L-glutamine + H2O = L-glutamate + NH4(+). It functions in the pathway cofactor biosynthesis; pyridoxal 5'-phosphate biosynthesis. Its function is as follows. Catalyzes the hydrolysis of glutamine to glutamate and ammonia as part of the biosynthesis of pyridoxal 5'-phosphate. The resulting ammonia molecule is channeled to the active site of PdxS. This is Pyridoxal 5'-phosphate synthase subunit PdxT from Thermosipho africanus (strain TCF52B).